The primary structure comprises 100 residues: Urease subunit gamma (100 aa).

This sequence belongs to the urease gamma subunit family. Heterotrimer of UreA (gamma), UreB (beta) and UreC (alpha) subunits. Three heterotrimers associate to form the active enzyme.

The protein localises to the cytoplasm. The enzyme catalyses urea + 2 H2O + H(+) = hydrogencarbonate + 2 NH4(+). The protein operates within nitrogen metabolism; urea degradation; CO(2) and NH(3) from urea (urease route): step 1/1. This Rhodopseudomonas palustris (strain BisA53) protein is Urease subunit gamma.